The sequence spans 95 residues: Mitochondrial import inner membrane translocase subunit Tim13 (95 aa).

M1 is subject to N-acetylmethionine. S7 is subject to Phosphoserine. The Twin CX3C motif signature appears at 46–69 (CFRKCIGKPGGSLDNSEQKCIAMC). 2 disulfide bridges follow: C46-C69 and C50-C65. K53 bears the N6-succinyllysine mark.

The protein belongs to the small Tim family. Heterohexamer; composed of 3 copies of TIMM8 (TIMM8A or TIMM8B) and 3 copies of TIMM13, named soluble 70 kDa complex. Associates with the TIM22 complex, whose core is composed of TIMM22. As to expression, present at high level in liver and brain, and at lower level in muscle and heart. In CNS sections, it is predominantly present in the soma and the dendritic portion of the Purkinje cells of the cerebellum, but not in the glial cells. Scattered expression also is also detected in the brain stem, olfactory bulb, substantia nigra, hippocampus and striatum (at protein level).

It is found in the mitochondrion inner membrane. Mitochondrial intermembrane chaperone that participates in the import and insertion of some multi-pass transmembrane proteins into the mitochondrial inner membrane. Also required for the transfer of beta-barrel precursors from the TOM complex to the sorting and assembly machinery (SAM complex) of the outer membrane. Acts as a chaperone-like protein that protects the hydrophobic precursors from aggregation and guide them through the mitochondrial intermembrane space. The TIMM8-TIMM13 complex mediates the import of proteins such as TIMM23, SLC25A12/ARALAR1 and SLC25A13/ARALAR2, while the predominant TIMM9-TIMM10 70 kDa complex mediates the import of much more proteins. In Mus musculus (Mouse), this protein is Mitochondrial import inner membrane translocase subunit Tim13 (Timm13).